Reading from the N-terminus, the 139-residue chain is uncharacterized protein (139 aa).

The chain crosses the membrane as a helical span at residues 77-97 (YCFFFFLVLFLNGIIATRGKA).

It localises to the mitochondrion membrane. This is an uncharacterized protein from Arabidopsis thaliana (Mouse-ear cress).